The following is a 245-amino-acid chain: Homeobox protein Hox-A4a (245 aa).

Residues 34–99 form a disordered region; the sequence is DYYERPKDPG…HGPRLTTESC (66 aa). Over residues 35-51 the composition is skewed to basic and acidic residues; the sequence is YYERPKDPGFPHHEEAS. Composition is skewed to polar residues over residues 53–73 and 82–99; these read PRSNYQEQSYDYGNVSTNDLN and QPQSVSQNHGPRLTTESC. Positions 126-131 match the Antp-type hexapeptide motif; the sequence is VYPWMK. Residues 147 to 206 constitute a DNA-binding region (homeobox); it reads PKRSRTAYTRQQALELEKEFHFNRYLTRRRRVEIAHTMCLSERQVKIWFQNRRMKWKKDH. The segment at 205–245 is disordered; sequence DHKLPNTKIRSSSSAPSNHHVKTDATQQQQTLLPTPCSSNL. The span at 212 to 221 shows a compositional bias: polar residues; sequence KIRSSSSAPS. Over residues 230 to 245 the composition is skewed to low complexity; that stretch reads TQQQQTLLPTPCSSNL.

This sequence belongs to the Antp homeobox family. Deformed subfamily.

The protein localises to the nucleus. Functionally, sequence-specific transcription factor which is part of a developmental regulatory system that provides cells with specific positional identities on the anterior-posterior axis. The protein is Homeobox protein Hox-A4a (hoxa4a) of Danio rerio (Zebrafish).